Reading from the N-terminus, the 58-residue chain is Small ribosomal subunit protein bS21 (58 aa).

Residues 37–58 (FYEKPSVKRKKKSEAARKRKKF) are disordered. Basic residues predominate over residues 43-58 (VKRKKKSEAARKRKKF).

The protein belongs to the bacterial ribosomal protein bS21 family.

This Enterococcus faecalis (strain ATCC 700802 / V583) protein is Small ribosomal subunit protein bS21.